A 489-amino-acid chain; its full sequence is Mitochondrial-processing peptidase subunit beta (489 aa).

The transit peptide at 1–43 (MAAAAARVVLSSAARRRLWGFSESLLIRGAAGRSLYFGENRLR) directs the protein to the mitochondrion. H101 contacts Zn(2+). The Proton acceptor role is filled by E104. Residues H105 and E181 each contribute to the Zn(2+) site.

The protein belongs to the peptidase M16 family. As to quaternary structure, heterodimer of PMPCA (alpha) and PMPCB (beta) subunits, forming the mitochondrial processing protease (MPP) in which PMPCA is involved in substrate recognition and binding and PMPCB is the catalytic subunit. It depends on Zn(2+) as a cofactor.

The protein localises to the mitochondrion matrix. It carries out the reaction Release of N-terminal transit peptides from precursor proteins imported into the mitochondrion, typically with Arg in position P2.. Binding to PMPCA is required for catalytic activity. Catalytic subunit of the essential mitochondrial processing protease (MPP), which cleaves the mitochondrial sequence off newly imported precursors proteins. Preferentially, cleaves after an arginine at position P2. Required for PINK1 turnover by coupling PINK1 mitochondrial import and cleavage, which results in subsequent PINK1 proteolysis. This Homo sapiens (Human) protein is Mitochondrial-processing peptidase subunit beta (PMPCB).